The primary structure comprises 759 residues: MERGAERGPPPAPGGVALRGQPAGGCGPWEMRDRLGTGGFGNVCLYQHQDTGARVAIKSCRLELSVKNKDRWCHEIDIMKKLNHPNVVRACEVPEEMNFLVNDVPLLAMEYCSGGDLRKLLNKPENCCGLKESQILSLLSDIGSGIQYLHENRIIHRDLKPENIVLQDEGGKIIHKIIDLGYAKDLDQGSLCTSFVGTLQYLAPELFENKSYSVTVDYWSFGTMVFECIAGFRPFLHNLQPFTWHEKIKKKDPKHIFASEEMNGEVRFSTHLPQPHSICSLIVEPMESWLQLMLNWDPEQRGGGLDPETNSPKCFLLMDHILNLKIVHILNMTSAKIVSFLLHPEESLHFLQNRIESETGISTGNQELLLETGICLDPRKPASQCVIDGVRGWDSYMVYLFDKSKTVYDGPFASRSLSECVNYIVQDSKIQLPIPQLRKVWAEAVHYVIGLKEDYSRLFQGQRAAMLSLLRYNANLIKMKNNMVSASQQLKAKLEFFHQSIRLDLERYSDQMAYGISSEKMLKAWKEMEEKASHCAQAEDIGYLDEQIMALHTEIVELQKSPYARRQGEVMESLEQRAIDLYKQLKTRPPDHAYSDSTDMVKIIVQTVQSQDRVLKELFGHLSKLLGCKQKIIDLLPKIEVALNNIKEADNSEMQMQGKRQREIWHLLKIACTQSSSRSLVSSSLEGTASTPAATWVPQSSSEYAPHPLSSMATPGDGENFVDVIEENLNYLDRFSSMLQEAREEQNNSLTNFDWSWLK.

A disordered region spans residues 1–20; the sequence is MERGAERGPPPAPGGVALRG. The 288-residue stretch at 29 to 316 folds into the Protein kinase domain; sequence WEMRDRLGTG…PETNSPKCFL (288 aa). Residues 35–43 and Lys-58 contribute to the ATP site; that span reads LGTGGFGNV. Asp-158 serves as the catalytic Proton acceptor. Residues 469-490 are leucine-zipper; that stretch reads LLRYNANLIKMKNNMVSASQQL. Positions 691 to 703 are enriched in polar residues; that stretch reads TPAATWVPQSSSE. A disordered region spans residues 691 to 715; it reads TPAATWVPQSSSEYAPHPLSSMATP. The segment at 753 to 758 is NEMO-binding; sequence FDWSWL.

It belongs to the protein kinase superfamily. Ser/Thr protein kinase family. I-kappa-B kinase subfamily.

The protein resides in the cytoplasm. Its subcellular location is the nucleus. It catalyses the reaction L-seryl-[I-kappa-B protein] + ATP = O-phospho-L-seryl-[I-kappa-B protein] + ADP + H(+). Its activity is regulated as follows. Activated when phosphorylated and inactivated when dephosphorylated. Functionally, phosphorylates inhibitors of NF-kappa-B thus leading to the dissociation of the inhibitor/NF-kappa-B complex and ultimately the degradation of the inhibitor. Phosphorylates 'Ser-10' of histone H3 at NF-kappa-B-regulated promoters during inflammatory responses triggered by cytokines. The polypeptide is Inhibitor of nuclear factor kappa-B kinase subunit alpha (CHUK) (Gallus gallus (Chicken)).